A 606-amino-acid polypeptide reads, in one-letter code: Pentatricopeptide repeat-containing protein At1g31920 (606 aa).

PPR repeat units follow at residues 96–130 (CTFDFNTMIRGYVNVMSFEEALCFYNEMMQRGNEP), 131–165 (DNFTYPCLLKACTRLKSIREGKQIHGQVFKLGLEA), 166–200 (DVFVQNSLINMYGRCGEMELSSAVFEKLESKTAAS), 201–227 (WSSMVSARAGMGMWSECLLLFRGMCSE), 233–263 (EESGMVSALLACANTGALNLGMSIHGFLLRN), 268–298 (NIIVQTSLVDMYVKCGCLDKALHIFQKMEKR), 299–333 (NNLTYSAMISGLALHGEGESALRMFSKMIKEGLEP), 334–368 (DHVVYVSVLNACSHSGLVKEGRRVFAEMLKEGKVE), and 370–404 (TAEHYGCLVDLLGRAGLLEEALETIQSIPIEKNDV). Residues 405-480 (IWRTFLSQCR…TPGFSIVELK (76 aa)) form a type E motif region. Residues 481 to 511 (GKTHRFVSQDRSHPKCKEIYKMLHQMEWQLK) are type E(+) motif. The tract at residues 512-606 (FEGYSPDLTQ…GGTCSCKDYW (95 aa)) is type DYW motif.

It belongs to the PPR family. PCMP-H subfamily.

This chain is Pentatricopeptide repeat-containing protein At1g31920 (PCMP-H11), found in Arabidopsis thaliana (Mouse-ear cress).